The sequence spans 455 residues: MVEDTASVAALYRSYLTPLDIDINIVGTGRDAIESIGRREPDLILLDLRLPDMTGMDVLYAVKEKSPDVPIVFMTAHGSIDTAVEAMRHGAQDFLIKPCEADRLRVTVNNAIRKASKLKNDVDNKNQNYQGFIGSSQTMQAVYRTIDSAASSKASIFITGESGTGKEVCAEAIHAASKRGDKPFIAINCAAIPKDLIESELFGHVKGAFTGAATERQGAAEAADGGTLFLDELCEMDLDLQTKLLRFIQTGTFQKVGSSKMKSVDVRFVCATNRDPWKEVQEGRFREDLYYRLYVIPLHLPPLRARGDDVIEIAYSLLGFMSKEEGKDFVRLSAEVVERFRQYEWPGNVRQLQNVLRNVVVLNEGREITLDMLPPPLNQMSAPINRALPLAHENKVSVHEIFPLWMTEKQAIEQAIEACDGNIPRAATYLDVSPSTIYRKLQTWNEKVKEKEKER.

The Response regulatory domain maps to 1–112 (MVEDTASVAA…RLRVTVNNAI (112 aa)). Residue aspartate 47 is modified to 4-aspartylphosphate. Residues 132-361 (FIGSSQTMQA…LQNVLRNVVV (230 aa)) enclose the Sigma-54 factor interaction domain. ATP is bound by residues 160 to 167 (GESGTGKE) and 223 to 232 (ADGGTLFLDE).

Involved in the regulation of different processes depending on the cell density. Acts together with sigma-54 to repress, perhaps indirectly, some genes. The polypeptide is Regulatory protein LuxO (luxO) (Vibrio cholerae serotype O1 (strain ATCC 39315 / El Tor Inaba N16961)).